The primary structure comprises 512 residues: Cytochrome P450 4d1 (512 aa).

2 residues coordinate heme: Glu316 and Cys456.

Belongs to the cytochrome P450 family. The cofactor is heme.

It is found in the endoplasmic reticulum membrane. The protein resides in the microsome membrane. Functionally, involved in the metabolism of insect hormones and in the breakdown of synthetic insecticides. This Drosophila melanogaster (Fruit fly) protein is Cytochrome P450 4d1 (Cyp4d1).